The following is a 67-amino-acid chain: Large ribosomal subunit protein bL35 (67 aa).

Residues 1–16 (MPKMKTKKSAAKRFRV) are compositionally biased toward basic residues. The segment at 1 to 22 (MPKMKTKKSAAKRFRVRPGGTV) is disordered.

It belongs to the bacterial ribosomal protein bL35 family.

The polypeptide is Large ribosomal subunit protein bL35 (Methylibium petroleiphilum (strain ATCC BAA-1232 / LMG 22953 / PM1)).